An 89-amino-acid polypeptide reads, in one-letter code: DNA-directed RNA polymerase subunit Rpo6 (89 aa).

This sequence belongs to the archaeal Rpo6/eukaryotic RPB6 RNA polymerase subunit family. As to quaternary structure, part of the 13-subunit RNA polymerase complex.

The protein localises to the cytoplasm. It carries out the reaction RNA(n) + a ribonucleoside 5'-triphosphate = RNA(n+1) + diphosphate. DNA-dependent RNA polymerase (RNAP) catalyzes the transcription of DNA into RNA using the four ribonucleoside triphosphates as substrates. Functionally, reconstitution experiments show this subunit is required for basic activity. The polypeptide is DNA-directed RNA polymerase subunit Rpo6 (Sulfolobus acidocaldarius (strain ATCC 33909 / DSM 639 / JCM 8929 / NBRC 15157 / NCIMB 11770)).